The following is a 176-amino-acid chain: Cytochrome b (176 aa).

The next 3 membrane-spanning stretches (helical) occupy residues 33-53, 77-98, and 113-133; these read FGSL…FLAM, WLLR…YLHI, and WNVG…GYVL. The heme b site is built by His83 and His97.

It belongs to the cytochrome b family. As to quaternary structure, the cytochrome bc1 complex contains 11 subunits: 3 respiratory subunits (MT-CYB, CYC1 and UQCRFS1), 2 core proteins (UQCRC1 and UQCRC2) and 6 low-molecular weight proteins (UQCRH/QCR6, UQCRB/QCR7, UQCRQ/QCR8, UQCR10/QCR9, UQCR11/QCR10 and a cleavage product of UQCRFS1). This cytochrome bc1 complex then forms a dimer. Heme b serves as cofactor.

The protein resides in the mitochondrion inner membrane. Its function is as follows. Component of the ubiquinol-cytochrome c reductase complex (complex III or cytochrome b-c1 complex) that is part of the mitochondrial respiratory chain. The b-c1 complex mediates electron transfer from ubiquinol to cytochrome c. Contributes to the generation of a proton gradient across the mitochondrial membrane that is then used for ATP synthesis. The chain is Cytochrome b (MT-CYB) from Eumops glaucinus (Wagner's mastiff bat).